A 325-amino-acid chain; its full sequence is Dehydrogenase/reductase SDR family member 7B (325 aa).

The Cytoplasmic segment spans residues methionine 1–aspartate 17. A helical; Signal-anchor for type II membrane protein transmembrane segment spans residues phenylalanine 18–phenylalanine 38. Residues lysine 39–serine 325 are Lumenal-facing. Positions 62 and 64 each coordinate NAD(+). Residue serine 194 participates in substrate binding. The NAD(+) site is built by tyrosine 207, lysine 211, and threonine 242. Tyrosine 207 serves as the catalytic Proton acceptor.

Belongs to the short-chain dehydrogenases/reductases (SDR) family.

It localises to the endoplasmic reticulum membrane. In terms of biological role, putative oxidoreductase. The sequence is that of Dehydrogenase/reductase SDR family member 7B (DHRS7B) from Bos taurus (Bovine).